A 546-amino-acid chain; its full sequence is MNPSTTQARIVVDELIRGGVRDVVLCPGSRNAPLAFALSDADRAGRIRLHVRIDERTAGYLAIGLAVAERAPVCIAMTSGTAVANLGPAVVEANYARVPLIVLSANRPYEMLGTGANQTFEQLGYFGTQVRAAISLGLAPDLTGPNAADLDTLNAQWRSATCRVLVAATGARSANAGPVQFDIPLREPLVPDPAEPAGGTIPPGRPGGRSWTHTPPVTFDQPLDIDLTPDTVVIAGHGAGEHPNLAELPTVAEPTAPPPANPLHPLALRLAHPKQVIMLGRPTLHRPVSTLLADPSVPVYALTTGPRWPDVSGNSQATGTRAVTSGAPSAAWLRKCAELNEHAVTAVRKQLAAHPMTTGLHVAAAVADALRPGDQLVLGASNPVRDAALVGLRPDGIKVRSNRGVAGIDGTISTAIGAALAHDGRTVALIGDLTFVHDSSGLLIGPTEPTPRSLTIVVSNDNGGGIFELLEQGDPRFSDVSSRIFGTPHDVNIGALCHAYHVDYHQIEADALGAALEDPFQGMRVLEVKADRSSLRSLHASIKAAL.

The protein belongs to the TPP enzyme family. MenD subfamily. Homodimer. Mg(2+) is required as a cofactor. Requires Mn(2+) as cofactor. It depends on thiamine diphosphate as a cofactor.

It catalyses the reaction isochorismate + 2-oxoglutarate + H(+) = 5-enolpyruvoyl-6-hydroxy-2-succinyl-cyclohex-3-ene-1-carboxylate + CO2. It functions in the pathway quinol/quinone metabolism; 1,4-dihydroxy-2-naphthoate biosynthesis; 1,4-dihydroxy-2-naphthoate from chorismate: step 2/7. Its pathway is quinol/quinone metabolism; menaquinone biosynthesis. In terms of biological role, catalyzes the thiamine diphosphate-dependent decarboxylation of 2-oxoglutarate and the subsequent addition of the resulting succinic semialdehyde-thiamine pyrophosphate anion to isochorismate to yield 2-succinyl-5-enolpyruvyl-6-hydroxy-3-cyclohexene-1-carboxylate (SEPHCHC). The protein is 2-succinyl-5-enolpyruvyl-6-hydroxy-3-cyclohexene-1-carboxylate synthase of Mycolicibacterium smegmatis (strain ATCC 700084 / mc(2)155) (Mycobacterium smegmatis).